The primary structure comprises 426 residues: Glutamate-1-semialdehyde 2,1-aminomutase (426 aa).

K265 bears the N6-(pyridoxal phosphate)lysine mark.

The protein belongs to the class-III pyridoxal-phosphate-dependent aminotransferase family. HemL subfamily. As to quaternary structure, homodimer. Requires pyridoxal 5'-phosphate as cofactor.

The protein resides in the cytoplasm. The enzyme catalyses (S)-4-amino-5-oxopentanoate = 5-aminolevulinate. Its pathway is porphyrin-containing compound metabolism; protoporphyrin-IX biosynthesis; 5-aminolevulinate from L-glutamyl-tRNA(Glu): step 2/2. The polypeptide is Glutamate-1-semialdehyde 2,1-aminomutase (Pectobacterium carotovorum subsp. carotovorum (strain PC1)).